The following is a 392-amino-acid chain: Phosphoglycerate kinase (392 aa).

Residues 21–23 (DFN), arginine 36, 59–62 (HLGR), arginine 118, and arginine 151 each bind substrate. ATP contacts are provided by residues lysine 201, glycine 292, glutamate 323, and 349-352 (GGDS).

Belongs to the phosphoglycerate kinase family. Monomer.

The protein resides in the cytoplasm. The enzyme catalyses (2R)-3-phosphoglycerate + ATP = (2R)-3-phospho-glyceroyl phosphate + ADP. It participates in carbohydrate degradation; glycolysis; pyruvate from D-glyceraldehyde 3-phosphate: step 2/5. In Borrelia hermsii (strain HS1 / DAH), this protein is Phosphoglycerate kinase.